The primary structure comprises 263 residues: Type-2Ba cytolytic delta-endotoxin (263 aa).

The protein belongs to the cyt1/cyt2 endotoxin family. Post-translationally, active after proteolytic processing.

In terms of biological role, kills the larvae of dipteran insects by making pores in the epithelial cell membrane of the insect midgut. The sequence is that of Type-2Ba cytolytic delta-endotoxin (cyt2Ba1) from Bacillus thuringiensis subsp. israelensis.